A 286-amino-acid polypeptide reads, in one-letter code: Homoserine kinase (286 aa).

Position 78-88 (78-88) interacts with ATP; it reads PLARGLGSSSS.

The protein belongs to the GHMP kinase family. Homoserine kinase subfamily.

The protein resides in the cytoplasm. It carries out the reaction L-homoserine + ATP = O-phospho-L-homoserine + ADP + H(+). The protein operates within amino-acid biosynthesis; L-threonine biosynthesis; L-threonine from L-aspartate: step 4/5. Its function is as follows. Catalyzes the ATP-dependent phosphorylation of L-homoserine to L-homoserine phosphate. In Streptococcus suis (strain 98HAH33), this protein is Homoserine kinase.